Consider the following 642-residue polypeptide: 1,4-alpha-glucan branching enzyme GlgB (642 aa).

Asp304 serves as the catalytic Nucleophile. The active-site Proton donor is the Glu355.

Belongs to the glycosyl hydrolase 13 family. GlgB subfamily. In terms of assembly, monomer.

It catalyses the reaction Transfers a segment of a (1-&gt;4)-alpha-D-glucan chain to a primary hydroxy group in a similar glucan chain.. It functions in the pathway glycan biosynthesis; glycogen biosynthesis. Functionally, catalyzes the formation of the alpha-1,6-glucosidic linkages in glycogen by scission of a 1,4-alpha-linked oligosaccharide from growing alpha-1,4-glucan chains and the subsequent attachment of the oligosaccharide to the alpha-1,6 position. In Streptococcus pneumoniae serotype 4 (strain ATCC BAA-334 / TIGR4), this protein is 1,4-alpha-glucan branching enzyme GlgB.